A 524-amino-acid polypeptide reads, in one-letter code: Nucleobase-ascorbate transporter 2 (524 aa).

Transmembrane regions (helical) follow at residues 41 to 61 (YILA…MMGG), 69 to 89 (VVQT…LFGT), 91 to 111 (LPTV…IIHD), 133 to 153 (GAII…MWAI), 155 to 175 (SRFF…FGLF), 179 to 199 (FPVV…FVIF), 217 to 237 (FALI…TASG), 282 to 302 (AFAM…AFKA), 359 to 379 (RVIQ…KFGA), 380 to 400 (LFAS…FGLV), 419 to 439 (LFIV…FRDF), and 457 to 477 (DFLN…AVFL).

Belongs to the nucleobase:cation symporter-2 (NCS2) (TC 2.A.40) family. Expressed in cotyledons 10 days after imbibition (DAI). Expressed in the minor and major veins of cotyledons and leaves, in the shoot apex and pedicels. Expressed in the root meristems, root tips and lateral root primordia.

Its subcellular location is the membrane. This Arabidopsis thaliana (Mouse-ear cress) protein is Nucleobase-ascorbate transporter 2 (NAT2).